A 150-amino-acid polypeptide reads, in one-letter code: Small ribosomal subunit protein uS9 (150 aa).

The protein belongs to the universal ribosomal protein uS9 family.

This is Small ribosomal subunit protein uS9 from Mycolicibacterium smegmatis (strain ATCC 700084 / mc(2)155) (Mycobacterium smegmatis).